The following is a 357-amino-acid chain: DNA primase small subunit PriS (357 aa).

Active-site residues include Asp105, Asp107, and Asp259.

This sequence belongs to the eukaryotic-type primase small subunit family. As to quaternary structure, heterodimer of a small subunit (PriS) and a large subunit (PriL). The cofactor is Mg(2+). Mn(2+) is required as a cofactor.

Its function is as follows. Catalytic subunit of DNA primase, an RNA polymerase that catalyzes the synthesis of short RNA molecules used as primers for DNA polymerase during DNA replication. The small subunit contains the primase catalytic core and has DNA synthesis activity on its own. Binding to the large subunit stabilizes and modulates the activity, increasing the rate of DNA synthesis while decreasing the length of the DNA fragments, and conferring RNA synthesis capability. The DNA polymerase activity may enable DNA primase to also catalyze primer extension after primer synthesis. May also play a role in DNA repair. In Methanococcus maripaludis (strain DSM 14266 / JCM 13030 / NBRC 101832 / S2 / LL), this protein is DNA primase small subunit PriS.